Consider the following 319-residue polypeptide: MIFYTLEHILTHISFSLVSIGITIFLITLSVDEIIGLYDSSEKGVIGTFLCITGLLVTRWAYSGHFPLSNLYESLLFLSWSFAIIHMFPYLKKQKSYVRTITSSSTIFTQGLVTSGLLSEMQQSEILVPALQSQWLMMHVSMMVLGYAALLCGSLLSVALLVITFRKARKIFSKKKAFLKDSFSFVEIQYRNEPSNVLLSTSFISSKNYYRAQLIQQLDRWSSRIISLGFIFLTIGILSGAVWANEAWGSYWNWDPKETWAFITWTMFAIYLHTRTNPNFQSVNSAIVAFLGFIIIWICYFGVNLLGIGLHSYGSFNLH.

A run of 7 helical transmembrane segments spans residues 9 to 29, 44 to 64, 71 to 91, 143 to 163, 225 to 245, 259 to 273, and 286 to 306; these read ILTH…LITL, GVIG…AYSG, LYES…FPYL, MVLG…LLVI, IISL…VWAN, TWAF…IYLH, and AIVA…VNLL.

Belongs to the CcmF/CycK/Ccl1/NrfE/CcsA family. As to quaternary structure, may interact with Ccs1.

It localises to the plastid. It is found in the chloroplast thylakoid membrane. In terms of biological role, required during biogenesis of c-type cytochromes (cytochrome c6 and cytochrome f) at the step of heme attachment. The protein is Cytochrome c biogenesis protein CcsA of Oenothera parviflora (Small-flowered evening primrose).